A 210-amino-acid polypeptide reads, in one-letter code: Large ribosomal subunit protein uL4 (210 aa).

Polar residues predominate over residues 41-51 (QNNARQGNASA). Residues 41-77 (QNNARQGNASAKTRAEVRGGGRKPWKQKGTGRARAGS) form a disordered region. Residues 60 to 71 (GGRKPWKQKGTG) show a composition bias toward basic residues.

This sequence belongs to the universal ribosomal protein uL4 family. Part of the 50S ribosomal subunit.

One of the primary rRNA binding proteins, this protein initially binds near the 5'-end of the 23S rRNA. It is important during the early stages of 50S assembly. It makes multiple contacts with different domains of the 23S rRNA in the assembled 50S subunit and ribosome. Functionally, forms part of the polypeptide exit tunnel. This chain is Large ribosomal subunit protein uL4, found in Synechocystis sp. (strain ATCC 27184 / PCC 6803 / Kazusa).